Reading from the N-terminus, the 137-residue chain is ATP synthase epsilon chain (137 aa).

The protein belongs to the ATPase epsilon chain family. F-type ATPases have 2 components, CF(1) - the catalytic core - and CF(0) - the membrane proton channel. CF(1) has five subunits: alpha(3), beta(3), gamma(1), delta(1), epsilon(1). CF(0) has three main subunits: a, b and c.

The protein localises to the cell membrane. Produces ATP from ADP in the presence of a proton gradient across the membrane. In Caldicellulosiruptor saccharolyticus (strain ATCC 43494 / DSM 8903 / Tp8T 6331), this protein is ATP synthase epsilon chain.